The sequence spans 981 residues: Ephrin type-A receptor 3 (981 aa).

Residues 1 to 20 (MALFRIYSFLAPFHILVLCQ) form the signal peptide. Topologically, residues 21 to 545 (ALRNYPDNEV…LAVGDPNQQT (525 aa)) are extracellular. The Eph LBD domain occupies 29–210 (EVTLLDSMSA…FYKRCPLAVL (182 aa)). Fibronectin type-III domains lie at 328–441 (PPSA…TSQT) and 442–533 (VSVI…TSHE). Residues asparagine 340, asparagine 410, asparagine 435, and asparagine 485 are each glycosylated (N-linked (GlcNAc...) asparagine). The helical transmembrane segment at 546 to 566 (ILAISVAGGAVLLVLLVACFI) threads the bilayer. Topologically, residues 567-981 (VSGRRCGYIK…QAHHGTQVQV (415 aa)) are cytoplasmic. Residues tyrosine 601 and tyrosine 607 each carry the phosphotyrosine; by autocatalysis modification. In terms of domain architecture, Protein kinase spans 626-887 (IRIERVIGAG…QIVNTLDRLI (262 aa)). Residues 633-638 (GAGEFG), lysine 658, and 705-711 (EYMENGS) each bind ATP. Tyrosine 706 carries the phosphotyrosine; by autocatalysis modification. Catalysis depends on aspartate 751, which acts as the Proton acceptor. 755–756 (RN) is a binding site for ATP. Tyrosine 784 and tyrosine 927 each carry phosphotyrosine; by autocatalysis. Residues 910–974 (AAVNTVEDWL…LSSIQCLQAH (65 aa)) form the SAM domain. The PDZ-binding signature appears at 979–981 (VQV).

This sequence belongs to the protein kinase superfamily. Tyr protein kinase family. Ephrin receptor subfamily. Heterotetramer upon binding of the ligand. The heterotetramer is composed of an ephrin dimer and a receptor dimer. Oligomerization is probably required to induce biological responses. In terms of processing, autophosphorylates upon activation by efna5. As to expression, widely expressed in the developing zebrafish nervous system.

It localises to the cell membrane. It catalyses the reaction L-tyrosyl-[protein] + ATP = O-phospho-L-tyrosyl-[protein] + ADP + H(+). Functionally, receptor tyrosine kinase which binds promiscuously membrane-bound ephrin family ligands residing on adjacent cells, leading to contact-dependent bidirectional signaling into neighboring cells. The signaling pathway downstream of the receptor is referred to as forward signaling while the signaling pathway downstream of the ephrin ligand is referred to as reverse signaling. Highly promiscuous for ephrin-A ligands it binds preferentially efna5. Upon activation by efna5 regulates cell-cell adhesion, cytoskeletal organization and cell migration. Plays a role in cardiac cells migration and differentiation probably through activation by efna1. Involved in the retinotectal mapping of neurons. May also control the segregation but not the guidance of motor and sensory axons during neuromuscular circuit development. In Danio rerio (Zebrafish), this protein is Ephrin type-A receptor 3 (epha3).